Here is a 128-residue protein sequence, read N- to C-terminus: Small ribosomal subunit protein uS8 (128 aa).

It belongs to the universal ribosomal protein uS8 family. In terms of assembly, part of the 30S ribosomal subunit. Contacts proteins S5 and S12.

One of the primary rRNA binding proteins, it binds directly to 16S rRNA central domain where it helps coordinate assembly of the platform of the 30S subunit. The sequence is that of Small ribosomal subunit protein uS8 from Methylacidiphilum infernorum (isolate V4) (Methylokorus infernorum (strain V4)).